The sequence spans 286 residues: Shikimate dehydrogenase (NADP(+)) (286 aa).

Shikimate-binding positions include 21 to 23 (TLS) and threonine 68. The Proton acceptor role is filled by lysine 72. Aspartate 84 serves as a coordination point for NADP(+). Shikimate-binding residues include asparagine 93 and aspartate 108. NADP(+) contacts are provided by residues 132-136 (GYGGA) and leucine 226. Shikimate is bound at residue tyrosine 228. Glycine 249 is a binding site for NADP(+).

This sequence belongs to the shikimate dehydrogenase family. Homodimer.

It catalyses the reaction shikimate + NADP(+) = 3-dehydroshikimate + NADPH + H(+). The protein operates within metabolic intermediate biosynthesis; chorismate biosynthesis; chorismate from D-erythrose 4-phosphate and phosphoenolpyruvate: step 4/7. Involved in the biosynthesis of the chorismate, which leads to the biosynthesis of aromatic amino acids. Catalyzes the reversible NADPH linked reduction of 3-dehydroshikimate (DHSA) to yield shikimate (SA). This is Shikimate dehydrogenase (NADP(+)) from Thermosynechococcus vestitus (strain NIES-2133 / IAM M-273 / BP-1).